The chain runs to 399 residues: Tyrosine--tRNA ligase (399 aa).

The short motif at 42–51 is the 'HIGH' region element; it reads PTAPDLHLGH. Positions 226–230 match the 'KMSKS' region motif; the sequence is KMSKS. Lys229 contributes to the ATP binding site. Residues 337-398 form the S4 RNA-binding domain; sequence LPVFQVVKQA…GKRKFASVVL (62 aa).

It belongs to the class-I aminoacyl-tRNA synthetase family. TyrS type 2 subfamily. Homodimer.

The protein resides in the cytoplasm. It catalyses the reaction tRNA(Tyr) + L-tyrosine + ATP = L-tyrosyl-tRNA(Tyr) + AMP + diphosphate + H(+). Functionally, catalyzes the attachment of tyrosine to tRNA(Tyr) in a two-step reaction: tyrosine is first activated by ATP to form Tyr-AMP and then transferred to the acceptor end of tRNA(Tyr). The chain is Tyrosine--tRNA ligase from Aromatoleum aromaticum (strain DSM 19018 / LMG 30748 / EbN1) (Azoarcus sp. (strain EbN1)).